A 594-amino-acid polypeptide reads, in one-letter code: Protein wntless (594 aa).

Over 1-13 the chain is Cytoplasmic; that stretch reads MSGTILENLSGRK. A helical transmembrane segment spans residues 14–34; sequence LSILVATLLLCQVLCFLLGGL. Topologically, residues 35 to 239 are lumenal; sequence YAPLPAGHVT…AIHQNGGFTQ (205 aa). An N-linked (GlcNAc...) asparagine glycan is attached at Asn58. Residues 240 to 260 traverse the membrane as a helical segment; that stretch reads IWLLLKTMLFPFVVGIMIWFW. The Cytoplasmic portion of the chain corresponds to 261–270; the sequence is RRVHLLQRSP. Residues 271-291 form a helical membrane-spanning segment; sequence ALLEYMLIYLGAALTFLNLPL. Residues 292 to 311 are Lumenal-facing; sequence EYLSLVYEMPYMLLLSDIRQ. The helical transmembrane segment at 312 to 332 threads the bilayer; that stretch reads GIFYAMLLTFWLVFAGEHMLI. Residues 333 to 344 are Cytoplasmic-facing; the sequence is QDAPNKSTIRSR. The chain crosses the membrane as a helical span at residues 345 to 365; the sequence is YWKHLSAVVVGCISLFVFDIC. The Lumenal portion of the chain corresponds to 366–390; sequence ERGVQLRNPFYSIWTTPLGAKVAMT. A helical transmembrane segment spans residues 391–411; the sequence is FIVLAGVSAAIYFLFLCYMIW. Topologically, residues 412 to 473 are cytoplasmic; the sequence is KVFRNIGDKR…ANESKGLIYR (62 aa). The chain crosses the membrane as a helical span at residues 474-494; it reads FKFLMLATLVCAALTVAGFIM. Residues 495–514 lie on the Lumenal side of the membrane; the sequence is GQMAEGQWDWNDNVAIQPTS. A helical membrane pass occupies residues 515–535; that stretch reads AFLTGVYGMWNIYIFALLILY. The Cytoplasmic portion of the chain corresponds to 536–594; the sequence is APSHKQWPTMHHSDETTQSNENIVASAASEEIEFSHLPSDSNPSEISSLTSFTRKVAFD. The segment at 571–594 is disordered; sequence HLPSDSNPSEISSLTSFTRKVAFD. Over residues 573 to 588 the composition is skewed to polar residues; that stretch reads PSDSNPSEISSLTSFT.

The protein belongs to the wntless family. Interacts with wg; in the Golgi. Interacts with Vps35, a component of the retromer complex; wls stability is regulated by Vps35. In terms of tissue distribution, ubiquitously expressed in the wing imaginal disk, increased expression is observed in a stripe at the dorso-ventral boundary and other regions of the wing disk that express wg. Also expresses in the leg imaginal disk. During larval development, expression is seen in both motorneurons and muscle.

It is found in the presynaptic cell membrane. It localises to the postsynaptic cell membrane. The protein localises to the cell membrane. The protein resides in the endosome membrane. Its subcellular location is the endoplasmic reticulum membrane. It is found in the golgi apparatus membrane. A segment polarity gene required for wingless (wg)-dependent patterning processes, acting in both wg-sending cells and wg-target cells. In non-neuronal cells wls directs wg secretion. The wls traffic loop encompasses the Golgi, the cell surface, an endocytic compartment and a retrograde route leading back to the Golgi, and involves clathrin-mediated endocytosis and the retromer complex (a conserved protein complex consisting of Vps35 and Vps26). In neuronal cells (the larval motorneuron NMJ), the wg signal moves across the synapse via the release of wls-containing exosome-like vesicles. Postsynaptic wls is required for the trafficking of fz2 through the fz2-interacting protein Grip. In Drosophila melanogaster (Fruit fly), this protein is Protein wntless.